Consider the following 479-residue polypeptide: Lactaldehyde dehydrogenase (479 aa).

Leu-150 is an NAD(+) binding site. A (S)-lactate-binding site is contributed by Arg-161. NAD(+)-binding positions include 176–179, Gln-214, and Ser-230; that span reads KPSE. A (S)-lactate-binding site is contributed by Glu-251. Residues Glu-251 and Cys-285 contribute to the active site. Asn-286 is a binding site for (S)-lactate. Arg-336 lines the NAD(+) pocket. (S)-lactate is bound by residues Glu-443 and His-449.

This sequence belongs to the aldehyde dehydrogenase family. In terms of assembly, homotetramer.

It catalyses the reaction (S)-lactaldehyde + NAD(+) + H2O = (S)-lactate + NADH + 2 H(+). The catalysed reaction is glycolaldehyde + NAD(+) + H2O = glycolate + NADH + 2 H(+). The protein operates within carbohydrate degradation; L-fucose degradation. It functions in the pathway carbohydrate degradation; L-rhamnose degradation. Its activity is regulated as follows. Substrate inhibition is very strong with lactaldehyde, diminishing progressively with glycolaldehyde, glyceraldehyde or methylglyoxal. Inhibited by p-hydroxy mercuribenzoate and by some cations, including Mn(2+), Ca(2+), Cu(2+) and Zn(2+). Inhibited by NADH. Functionally, catalyzes the irreversible oxidation of L-lactaldehyde to L-lactate. Also shows high activity with glycolaldehyde and L-glyceraldehyde. Has weaker activity with various aldehydes such as methylglyoxal, propionaldehyde or benzaldehyde. Involved in the degradation of lactaldehyde produced during metabolism of L-fucose and L-rhamnose. It may be involved in several other metabolic pathways. The chain is Lactaldehyde dehydrogenase (aldA) from Escherichia coli (strain K12).